Here is a 280-residue protein sequence, read N- to C-terminus: Protein YIP4b (280 aa).

The segment covering 1–15 (MSHNDTIPLYQSSQS) has biased composition (polar residues). The tract at residues 1–106 (MSHNDTIPLY…SGFGSPPNTL (106 aa)) is disordered. Over 1-146 (MSHNDTIPLY…DPGKALRDWD (146 aa)) the chain is Cytoplasmic. The helical transmembrane segment at 147-167 (LWGPFFFIVFLGLTLSWSASV) threads the bilayer. Residues 168 to 171 (KKSE) are Lumenal-facing. A run of 2 helical transmembrane segments spans residues 172 to 192 (VFAV…LNVL) and 193 to 213 (LLGG…CLFP). The Lumenal portion of the chain corresponds to 214 to 230 (LDVGAVICMLKDNVILK). The helical transmembrane segment at 231–251 (MVVVSVTLAWSSWAAYPFMSA) threads the bilayer. Residues 252–258 (AVNPRRK) are Cytoplasmic-facing. Residues 259–279 (ALALYPVFLMYVSVGFLIIAI) form a helical membrane-spanning segment. N280 is a topological domain (lumenal).

This sequence belongs to the YIP1 family. Homodimer and heterodimer with YIP4A. Component of a trans-Golgi network (TGN)-localized ECH/YIP4 complex made of ECH, YIP4A and YIP4B. Interacts directly with ECH. As to expression, expressed in developing root hair cells.

Its subcellular location is the golgi apparatus. It localises to the trans-Golgi network membrane. Its function is as follows. Together with YIP4A, involved in the regulation of cell elongation during root and hypocotyl growth. YIP4A and YIP4B are central trafficking components in Rho-of-plant (ROPs, e.g. ARAC4/ROP2, ARAC5/ROP4 and ARAC3/ROP6) small GTPases-dependent root hair formation, thus contributing to activation and plasma membrane accumulation of ROPs during hair initiation. The ECH/YIP4 complex is involved in the modulation of the trans-Golgi network (TGN)-mediated trafficking of some proteins and cell wall components (e.g. pectin and hemicellulose) to the cell wall in dark-grown hypocotyls and in secretory cells of the seed coat. This Arabidopsis thaliana (Mouse-ear cress) protein is Protein YIP4b.